Reading from the N-terminus, the 101-residue chain is MDIRILKDKNNALLNRRELDFIVKYEGSTPSRNDVRNKLAAMLNAPLELVVVQRLKTEYGMQEGKGYAKIYENADRMKDVELEYVLKRNVAPGMETEGEEA.

The protein belongs to the eukaryotic ribosomal protein eS24 family.

In Methanosarcina barkeri (strain Fusaro / DSM 804), this protein is Small ribosomal subunit protein eS24.